Consider the following 297-residue polypeptide: UDP-3-O-acyl-N-acetylglucosamine deacetylase (297 aa).

Positions 79, 238, and 242 each coordinate Zn(2+). His-265 serves as the catalytic Proton donor.

The protein belongs to the LpxC family. The cofactor is Zn(2+).

The enzyme catalyses a UDP-3-O-[(3R)-3-hydroxyacyl]-N-acetyl-alpha-D-glucosamine + H2O = a UDP-3-O-[(3R)-3-hydroxyacyl]-alpha-D-glucosamine + acetate. Its pathway is glycolipid biosynthesis; lipid IV(A) biosynthesis; lipid IV(A) from (3R)-3-hydroxytetradecanoyl-[acyl-carrier-protein] and UDP-N-acetyl-alpha-D-glucosamine: step 2/6. Its function is as follows. Catalyzes the hydrolysis of UDP-3-O-myristoyl-N-acetylglucosamine to form UDP-3-O-myristoylglucosamine and acetate, the committed step in lipid A biosynthesis. This chain is UDP-3-O-acyl-N-acetylglucosamine deacetylase, found in Blochmanniella pennsylvanica (strain BPEN).